Consider the following 351-residue polypeptide: Blue-sensitive opsin (351 aa).

Residues 1–40 lie on the Extracellular side of the membrane; that stretch reads MKQVPEFHEDFYIPIPLDINNLSAYSPFLVPQDHLGNQGI. A glycan (N-linked (GlcNAc...) asparagine) is linked at Asn-21. The chain crosses the membrane as a helical span at residues 41–65; it reads FMAMSVFMFFIFIGGASINILTILC. Residues 66 to 77 lie on the Cytoplasmic side of the membrane; the sequence is TIQFKKLRSHLN. The chain crosses the membrane as a helical span at residues 78–103; sequence YILVNLSIANLFVAIFGSPLSFYSFF. Over 104–117 the chain is Extracellular; the sequence is NRYFIFGATACKIE. The cysteines at positions 114 and 191 are disulfide-linked. A helical membrane pass occupies residues 118–137; that stretch reads GFLATLGGMVGLWSLAVVAF. Residues 138–156 are Cytoplasmic-facing; sequence ERWLVICKPLGNFTFKTPH. A helical transmembrane segment spans residues 157-180; that stretch reads AIAGCILPWISALAASLPPLFGWS. The Extracellular portion of the chain corresponds to 181–206; the sequence is RYIPEGLQCSCGPDWYTTNNKYNNES. The chain crosses the membrane as a helical span at residues 207-234; that stretch reads YVMFLFCFCFAVPFGTIVFCYGQLLITL. Topologically, residues 235-256 are cytoplasmic; sequence KLAAKAQADSASTQKAEREVTK. The chain crosses the membrane as a helical span at residues 257 to 280; that stretch reads MVVVMVLGFLVCWAPYASFSLWIV. Topologically, residues 281-288 are extracellular; sequence SHRGEEFD. A helical transmembrane segment spans residues 289-313; that stretch reads LRMATIPSCLSKASTVYNPVIYVLM. N6-(retinylidene)lysine is present on Lys-300. Over 314 to 351 the chain is Cytoplasmic; that stretch reads NKQFRSCMMKMVCGKNIEEDEASTSSQVTQVSSVAPEK.

The protein belongs to the G-protein coupled receptor 1 family. Opsin subfamily. Phosphorylated on some or all of the serine and threonine residues present in the C-terminal region. In terms of tissue distribution, the color pigments are found in the cone photoreceptor cells.

Its subcellular location is the membrane. Functionally, visual pigments are the light-absorbing molecules that mediate vision. They consist of an apoprotein, opsin, covalently linked to cis-retinal. The protein is Blue-sensitive opsin of Carassius auratus (Goldfish).